Consider the following 72-residue polypeptide: Protein RALF-like 11 (72 aa).

Positions Met-1–Ala-17 are cleaved as a signal peptide. Cystine bridges form between Cys-34–Cys-43 and Cys-63–Cys-69.

This sequence belongs to the plant rapid alkalinization factor (RALF) family.

The protein resides in the secreted. Cell signaling peptide that may regulate plant stress, growth, and development. Mediates a rapid alkalinization of extracellular space by mediating a transient increase in the cytoplasmic Ca(2+) concentration leading to a calcium-dependent signaling events through a cell surface receptor and a concomitant activation of some intracellular mitogen-activated protein kinases. This chain is Protein RALF-like 11 (RALFL11), found in Arabidopsis thaliana (Mouse-ear cress).